Here is a 32-residue protein sequence, read N- to C-terminus: Beta-1,4-galactosyltransferase 1 (32 aa).

Belongs to the glycosyltransferase 7 family. Mn(2+) is required as a cofactor. The soluble form derives from the membrane form by proteolytic processing.

The protein resides in the golgi apparatus. It localises to the golgi stack membrane. Its subcellular location is the secreted. It is found in the cell membrane. The protein localises to the cell projection. The protein resides in the filopodium. It catalyses the reaction D-glucose + UDP-alpha-D-galactose = lactose + UDP + H(+). The enzyme catalyses an N-acetyl-beta-D-glucosaminyl derivative + UDP-alpha-D-galactose = a beta-D-galactosyl-(1-&gt;4)-N-acetyl-beta-D-glucosaminyl derivative + UDP + H(+). The catalysed reaction is N-acetyl-D-glucosamine + UDP-alpha-D-galactose = beta-D-galactosyl-(1-&gt;4)-N-acetyl-D-glucosamine + UDP + H(+). It carries out the reaction a beta-D-GlcNAc-(1-&gt;3)-beta-D-Gal-(1-&gt;4)-beta-D-Glc-(1&lt;-&gt;1)-Cer(d18:1(4E)) + UDP-alpha-D-galactose = a neolactoside nLc4Cer(d18:1(4E)) + UDP + H(+). It catalyses the reaction a beta-D-glucosylceramide + UDP-alpha-D-galactose = a beta-D-galactosyl-(1-&gt;4)-beta-D-glucosyl-(1&lt;-&gt;1)-ceramide + UDP + H(+). The enzyme catalyses a neolactoside IV(3)-beta-GlcNAc-nLc4Cer + UDP-alpha-D-galactose = a neolactoside nLc6Cer + UDP + H(+). It participates in protein modification; protein glycosylation. Its function is as follows. This protein is responsible for the synthesis of complex-type N-linked oligosaccharides in many glycoproteins as well as the carbohydrate moieties of glycolipids. This Rattus norvegicus (Rat) protein is Beta-1,4-galactosyltransferase 1.